Reading from the N-terminus, the 313-residue chain is Aspartate carbamoyltransferase catalytic subunit (313 aa).

2 residues coordinate carbamoyl phosphate: R58 and T59. K86 contacts L-aspartate. Carbamoyl phosphate-binding residues include R108, H136, and Q139. Positions 169 and 223 each coordinate L-aspartate. G264 and P265 together coordinate carbamoyl phosphate.

Belongs to the aspartate/ornithine carbamoyltransferase superfamily. ATCase family. Heterododecamer (2C3:3R2) of six catalytic PyrB chains organized as two trimers (C3), and six regulatory PyrI chains organized as three dimers (R2).

It carries out the reaction carbamoyl phosphate + L-aspartate = N-carbamoyl-L-aspartate + phosphate + H(+). The protein operates within pyrimidine metabolism; UMP biosynthesis via de novo pathway; (S)-dihydroorotate from bicarbonate: step 2/3. Catalyzes the condensation of carbamoyl phosphate and aspartate to form carbamoyl aspartate and inorganic phosphate, the committed step in the de novo pyrimidine nucleotide biosynthesis pathway. The sequence is that of Aspartate carbamoyltransferase catalytic subunit from Chlorobium luteolum (strain DSM 273 / BCRC 81028 / 2530) (Pelodictyon luteolum).